Consider the following 76-residue polypeptide: Exodeoxyribonuclease 7 small subunit (76 aa).

It belongs to the XseB family. In terms of assembly, heterooligomer composed of large and small subunits.

It localises to the cytoplasm. It catalyses the reaction Exonucleolytic cleavage in either 5'- to 3'- or 3'- to 5'-direction to yield nucleoside 5'-phosphates.. In terms of biological role, bidirectionally degrades single-stranded DNA into large acid-insoluble oligonucleotides, which are then degraded further into small acid-soluble oligonucleotides. This chain is Exodeoxyribonuclease 7 small subunit, found in Staphylococcus epidermidis (strain ATCC 35984 / DSM 28319 / BCRC 17069 / CCUG 31568 / BM 3577 / RP62A).